The sequence spans 628 residues: MAELGELKHMVMSFRVSELQVLLGFAGRNKSGRKHELLAKALHLLKSSCAPSVQMKIKELYRRRFPRKTLGPSDLSLLSLPPGTSPVGSPGPLAPIPPTLLTPGTLLGPKREVDMHPPLPQPVHPDVTMKPLPFYEVYGELIRPTTLASTSSQRFEEAHFTFALTPQQLQQILTSREVLPGAKCDYTIQVQLRFCLCETSCPQEDYFPPNLFVKVNGKLCPLPGYLPPTKNGAEPKRPSRPINITPLARLSATVPNTIVVNWSSEFGRNYSLSVYLVRQLTAGTLLQKLRAKGIRNPDHSRALIKEKLTADPDSEVATTSLRVSLMCPLGKMRLTVPCRALTCAHLQSFDAALYLQMNEKKPTWTCPVCDKKAPYESLIIDGLFMEILNSCSDCDEIQFMEDGSWCPMKPKKEASEVCPPPGYGLDGLQYSAVQEGIQPESKKRVEVIDLTIESSSDEEDLPPTKKHCPVTSAAIPALPGSKGALTSGHQPSSVLRSPAMGTLGSDFLSSLPLHEYPPAFPLGADIQGLDLFSFLQTESQHYGPSVITSLDEQDTLGHFFQYRGTPSHFLGPLAPTLGSSHRSSTPAPPPGRVSSIVAPGSSLREGHGGPLPSGPSLTGCRSDVISLD.

The interaction with CCAR2 stretch occupies residues 1–200 (MAELGELKHM…QLRFCLCETS (200 aa)). An SAP domain is found at 11 to 45 (VMSFRVSELQVLLGFAGRNKSGRKHELLAKALHLL). The short motif at 19-23 (LQVLL) is the LXXLL motif element. Residues Lys46, Lys56, Lys230, and Lys307 each participate in a glycyl lysine isopeptide (Lys-Gly) (interchain with G-Cter in SUMO2) cross-link. Residues 115-280 (MHPPLPQPVH…SLSVYLVRQL (166 aa)) enclose the PINIT domain. Residues 312-393 (PDSEVATTSL…FMEILNSCSD (82 aa)) form an SP-RING-type zinc finger. Zn(2+) is bound by residues Cys343, His345, Cys366, and Cys369. The tract at residues 450–460 (LTIESSSDEED) is SUMO1-binding. Residues Lys466 and Lys482 each participate in a glycyl lysine isopeptide (Lys-Gly) (interchain with G-Cter in SUMO2) cross-link. Residues 571-628 (GPLAPTLGSSHRSSTPAPPPGRVSSIVAPGSSLREGHGGPLPSGPSLTGCRSDVISLD) are disordered.

Belongs to the PIAS family. Monomer. Interacts with PLAG1 and ZFHX3. Interacts with STAT5A; the interaction occurs on stimulation by PRL. Binds SUMO1 and UBE2I. Interacts with AR, BCL11A, HMGA2, IRF1 and NCOA2. Interacts with MITF; the interaction inhibits the transcriptional activity of MITF. Interacts with STAT3; the interaction occurs on stimulation by IL6, CNTF or OSM and inhibits the DNA binding activity of STAT3. Interacts with GFI1; the interaction relieves the inhibitory effect of PIAS3 on STAT3-mediated transcriptional activity. Interacts with MTA1. Interacts with CCAR2 (via N-terminus). Interacts with TRIM8. Interacts with PRDM1. Post-translationally, sumoylated. Expressed in kidney, heart, spleen, brain and cerebellum; weak expression, if any, in liver and lung.

It localises to the cytoplasm. The protein resides in the nucleus. Its subcellular location is the nucleus speckle. The protein operates within protein modification; protein sumoylation. Functionally, functions as an E3-type small ubiquitin-like modifier (SUMO) ligase, stabilizing the interaction between UBE2I and the substrate, and as a SUMO-tethering factor. Plays a crucial role as a transcriptional coregulation in various cellular pathways, including the STAT pathway and the steroid hormone signaling pathway. Repressor of STAT3 signaling via inhibiting STAT3 DNA-binding and suppressing cell growth. Repressor of MITF transcriptional activity. Enhances the sumoylation of MTA1 and may participate in its paralog-selective sumoylation. Sumoylates CCAR2 which promotes its interaction with SIRT1. Diminishes the sumoylation of ZFHX3 by preventing the colocalization of ZFHX3 with SUMO1 in the nucleus. This Mus musculus (Mouse) protein is E3 SUMO-protein ligase PIAS3 (Pias3).